The primary structure comprises 638 residues: LIM domain kinase 2 (638 aa).

LIM zinc-binding domains are found at residues 12 to 63 (CRGC…CHKD) and 72 to 124 (CHGC…CGKC). A PDZ domain is found at 152-239 (LISMPATTEC…TLQLLIEHDP (88 aa)). Threonine 210 carries the post-translational modification Phosphothreonine. The disordered stretch occupies residues 255–304 (PHMQSTGHTLMLSTLDTKENQEGTLRRRSLRRSNSISKSPGPSSPKEPLL). The segment covering 257–269 (MQSTGHTLMLSTL) has biased composition (polar residues). A compositionally biased stretch (basic and acidic residues) spans 270–279 (DTKENQEGTL). The span at 286–304 (RSNSISKSPGPSSPKEPLL) shows a compositional bias: low complexity. Phosphoserine occurs at positions 293 and 298. The Protein kinase domain occupies 331 to 608 (LIHGEVLGKG…DSFEALSLFL (278 aa)). ATP contacts are provided by residues 337–345 (LGKGFFGQA) and lysine 360. The active site involves aspartate 451. Threonine 505 is modified (phosphothreonine; by ROCK1 and CDC42BP).

This sequence belongs to the protein kinase superfamily. TKL Ser/Thr protein kinase family. As to quaternary structure, binds ROCK1 and MARF1. Interacts with NISCH. Phosphorylated on serine and/or threonine residues by ROCK1. In terms of tissue distribution, specifically expressed in the testes.

It is found in the cytoplasm. It localises to the cytoskeleton. Its subcellular location is the spindle. The protein resides in the microtubule organizing center. The protein localises to the centrosome. It is found in the nucleus. It localises to the perinuclear region. The enzyme catalyses L-seryl-[protein] + ATP = O-phospho-L-seryl-[protein] + ADP + H(+). It carries out the reaction L-threonyl-[protein] + ATP = O-phospho-L-threonyl-[protein] + ADP + H(+). Its function is as follows. Serine/threonine-protein kinase that plays an essential role in the regulation of actin filament dynamics. Acts downstream of several Rho family GTPase signal transduction pathways. Involved in astral microtubule organization and mitotic spindle orientation during early stages of mitosis by mediating phosphorylation of TPPP. Displays serine/threonine-specific phosphorylation of myelin basic protein and histone (MBP) in vitro. Suppresses ciliogenesis via multiple pathways; phosphorylation of CFL1, suppression of directional trafficking of ciliary vesicles to the ciliary base, and by facilitating YAP1 nuclear localization where it acts as a transcriptional corepressor of the TEAD4 target genes AURKA and PLK1. This Mus musculus (Mouse) protein is LIM domain kinase 2 (Limk2).